We begin with the raw amino-acid sequence, 418 residues long: Thyroid hormone receptor alpha-A (418 aa).

Residues 1-38 form a disordered region; sequence MDQNLSGLDCLSEPDEKRWPDGKRKRKNSQCMGKSGMS. The interval 1–60 is modulating; it reads MDQNLSGLDCLSEPDEKRWPDGKRKRKNSQCMGKSGMSGDSLVSLPSAGYIPSYLDKDEP. 2 NR C4-type zinc fingers span residues 61-81 and 99-123; these read CVVC…CEGC and CKYD…FKKC. The nuclear receptor DNA-binding region spans 61–135; the sequence is CVVCSDKATG…VGMAMDLVLD (75 aa). Residues 171 to 415 enclose the NR LBD domain; sequence EEWELIRIVT…PPLFLEVFED (245 aa).

The protein belongs to the nuclear hormone receptor family. NR1 subfamily. Binds to thyroid hormone receptor element (TRE) weakly as homodimers and monomers, but binds TRE with much higher affinity as heterodimers with retinoid X receptors. Can bind DNA as a heterodimer with either rxra or rxrg.

The protein localises to the nucleus. In terms of biological role, high affinity receptor for triiodothyronine (T3). In Xenopus laevis (African clawed frog), this protein is Thyroid hormone receptor alpha-A (thra-a).